The sequence spans 343 residues: Cytoplasmic tRNA 2-thiolation protein 1 (343 aa).

The protein belongs to the TtcA family. CTU1/NCS6/ATPBD3 subfamily.

The protein resides in the cytoplasm. It participates in tRNA modification; 5-methoxycarbonylmethyl-2-thiouridine-tRNA biosynthesis. In terms of biological role, plays a central role in 2-thiolation of mcm(5)S(2)U at tRNA wobble positions of tRNA(Lys), tRNA(Glu) and tRNA(Gln). Directly binds tRNAs and probably acts by catalyzing adenylation of tRNAs, an intermediate required for 2-thiolation. It is unclear whether it acts as a sulfurtransferase that transfers sulfur from thiocarboxylated URM1 onto the uridine of tRNAs at wobble position. This Drosophila pseudoobscura pseudoobscura (Fruit fly) protein is Cytoplasmic tRNA 2-thiolation protein 1.